The sequence spans 556 residues: Potassium-transporting ATPase potassium-binding subunit (556 aa).

Helical transmembrane passes span 6-26 (AGLIFLAVLVAALVVVHVPLG), 65-85 (GVLAFSSVSIIFLFVLQLVQG), 133-153 (GLAVQNFVSAAVGMAVAVALV), 176-196 (LRILLPISIVGAVLLVAGGAI), 249-269 (PTAWTNWLEIFLILVIGFSLP), 283-303 (YAIASVMASLYLLSTGFMLWF), 378-398 (GLYGMLVLAVITVFVAGLMVG), 419-439 (YFLVTPLIVLTGTAIAMALPG), 483-503 (ALGLAMAFGRFLPIVLVLALA), and 526-546 (FVGMVAGVTLIVVALTFLPML).

It belongs to the KdpA family. The system is composed of three essential subunits: KdpA, KdpB and KdpC.

The protein resides in the cell membrane. Part of the high-affinity ATP-driven potassium transport (or Kdp) system, which catalyzes the hydrolysis of ATP coupled with the electrogenic transport of potassium into the cytoplasm. This subunit binds the extracellular potassium ions and delivers the ions to the membrane domain of KdpB through an intramembrane tunnel. The sequence is that of Potassium-transporting ATPase potassium-binding subunit from Mycobacterium avium (strain 104).